A 151-amino-acid chain; its full sequence is MTNYTAINYLLYLLSKRDYSEQDLRRKLVQKEYSQEEIEQAIERAQANNWQSDERYCAGFIRYRSQQGIGPRRLKQELKLKGIKDWLINQELENAEIDWFILAEQVFEKKRPQVWDIKAKQKMWRFMLSRGFYNDHFSHLMDIDYNDTEYE.

Belongs to the RecX family.

It is found in the cytoplasm. Its function is as follows. Modulates RecA activity. This chain is Regulatory protein RecX, found in Actinobacillus pleuropneumoniae serotype 5b (strain L20).